The primary structure comprises 151 residues: MSTPARRRLMRDFKRLQEDPPTGVSGAPTDNNIMIWNAVIFGPHDTPFEDGTFKLTIEFTEEYPNKPPTVRFVSKVFHPNVYADGGICLDILQNRWSPTYDVSAILTSIQSLLSDPNPNSPANSTAAQLYKENRREYEKRVKACVEQSFID.

Residues 4-150 (PARRRLMRDF…VKACVEQSFI (147 aa)) enclose the UBC core domain. C88 (glycyl thioester intermediate) is an active-site residue.

It belongs to the ubiquitin-conjugating enzyme family.

It localises to the nucleus. The catalysed reaction is S-ubiquitinyl-[E1 ubiquitin-activating enzyme]-L-cysteine + [E2 ubiquitin-conjugating enzyme]-L-cysteine = [E1 ubiquitin-activating enzyme]-L-cysteine + S-ubiquitinyl-[E2 ubiquitin-conjugating enzyme]-L-cysteine.. It functions in the pathway protein modification; protein ubiquitination. In terms of biological role, E2 ubiquitin-conjugating enzyme that accepts ubiquitin from the ubiquitin-activating enzyme E1 and transfers it to a E3 ubiquitin-protein ligase. Required for postreplication repair of UV-damaged DNA. Involved in the negative regulation of the Ras/MAPK signaling pathway in the wing by acting with the putative E3 ligases poe, Kcmf1 and Ufd4 to mediate the ubiquitination and proteasomal degradation of rl/MAPK. Required for in mitophagy. The sequence is that of Ubiquitin-conjugating enzyme E2-17 kDa from Drosophila melanogaster (Fruit fly).